Here is a 1002-residue protein sequence, read N- to C-terminus: Copper-transporting ATPase HMA5 (1002 aa).

Low complexity predominate over residues 32-48; sequence RPRYPSMPRRPRSAAVA. The segment at 32-63 is disordered; that stretch reads RPRYPSMPRRPRSAAVAGEGGEGGGGGGDGDL. Residues 49–60 are compositionally biased toward gly residues; sequence GEGGEGGGGGGD. 3 consecutive HMA domains span residues 75–141, 153–219, and 228–294; these read KVAV…FEAK, LVCR…FEAI, and SRID…SGDL. Positions 86, 89, 164, and 167 each coordinate Cu(+). Helical transmembrane passes span 320 to 340, 354 to 374, 392 to 412, 425 to 445, 585 to 605, 624 to 644, 943 to 963, and 972 to 992; these read FLWSLVFTIPVFLTSMVFMYI, MMSIGELLRWILSTPVQFVIG, MDVLIALGTNTAYFYSVYSIL, FFETSSMLISFILLGKYLEIL, VFVPLVIILSLLTWLAWFLAG, LALQFGISVMVIACPCALGLA, YVWALGYNIIGIPIAAGVLFP, and WVAGAAMAASSVSVVCWSLLL.

Belongs to the cation transport ATPase (P-type) (TC 3.A.3) family. Type IB subfamily. In terms of tissue distribution, expressed in root pericycle cells, xylem region of diffuse vascular bundles in the first node, and vascular tissues of peduncle, rachis and husk.

Its subcellular location is the cell membrane. It carries out the reaction Cu(+)(in) + ATP + H2O = Cu(+)(out) + ADP + phosphate + H(+). Its function is as follows. Copper (Cu) transporter that plays an essential role in promoting translocation of Cu from roots to shoots. Involved in loading Cu to the xylem of the roots and other organs, including panicles. This Oryza sativa subsp. japonica (Rice) protein is Copper-transporting ATPase HMA5.